Here is a 364-residue protein sequence, read N- to C-terminus: MSTATSAPVVESMSDTVVCPQLSRHSTSLEELYTIGYNRSHSPSCFSSAGCEEEEGQKNVLAERYKTKLCKNFVQYGTCPYDIRCMFAHGEEELRTAEMNIMDGLVTKDAITSFQKLWHRAVSASSGSKHHSSHVANRRGVMTTATTTTTAGGSTDAAMHICRRMQRVVAAAAAAVPCGGRRVVSGSIRIRGCVRHNPYCHNILPTVSRYYSTMPDVFTRPYSKSDSCGNEAITEGNAWTYANEEGNEKETPAMISSGVPELTAWKRFNYVAERSQCTSVPEQNLPCADFAAIKESNNTGGNASGVDVENVDDAEHSTCSSVGNESGYFCRASRSASCGEQSQSHLKREGNEGRGEGLHMFLSL.

The C3H1-type zinc finger occupies 64–92 (RYKTKLCKNFVQYGTCPYDIRCMFAHGEE). Positions 194 to 199 (VRHNPY) match the MKT1-binding motif motif. Residues 340-364 (EQSQSHLKREGNEGRGEGLHMFLSL) are disordered. Residues 346–357 (LKREGNEGRGEG) are compositionally biased toward basic and acidic residues.

Interacts (via MKT1-binding motif) with MKT1. Interacts with PBP1 (via C-terminus); the interaction is direct. In terms of processing, phosphorylated at the N-terminus. CK1.2-dependent phosphorylation may lead to proteasome-dependent degradation of ZC3H11 in absence of stress.

It is found in the cytoplasm. In terms of biological role, RNA-binding protein involved in regulation of mRNA stability. Binds AU-rich regions in the 3'-UTR of mRNAs and promotes their stabilization by recruiting a MKT1-containing complex. Stabilizes chaperone mRNAs during stress that causes an accumulation of misfolded or unfolded proteins in the cytoplasm. In Trypanosoma brucei brucei (strain 927/4 GUTat10.1), this protein is RNA-binding protein ZC3H11.